The chain runs to 762 residues: Chondroadherin-like protein (762 aa).

Residues 1-30 (MEGPRSSTHVPLVLPLLVLLLLAPARQAAA) form the signal peptide. Residues 31–62 (QRCPQACICDNSRRHVACRYQNLTEVPDAIPE) enclose the LRRNT 1 domain. An N-linked (GlcNAc...) asparagine glycan is attached at asparagine 52. 9 LRR repeats span residues 87-108 (HLTH…AFRG), 111-132 (RLLL…ALDG), 135-156 (SLRR…TFGA), 159-180 (ALAT…AFQG), 183-204 (RVRW…ALAG), 207-228 (ALRR…VLSQ), 231-252 (GLAR…DGLA), 255-276 (GLRE…AFAH), and 279-300 (RLHT…QGPG). Residues 310–359 (NPLWCGCQARPLLEWLARARVRSDGACQGPRRLRGEALDALRPWDLRCPG) form the LRRCT 1 domain. Positions 364–390 (EEEELEERAVAGPRAPPRGPPRGPGEE) are disordered. Over residues 377-386 (RAPPRGPPRG) the composition is skewed to pro residues. Residues 387–425 (PGEERAVAPCPRACVCVPESRHSSCEGCGLQAVPRGFPS) enclose the LRRNT 2 domain. Cysteine 396 and cysteine 411 are joined by a disulfide. 10 LRR repeats span residues 426–447 (DTQL…AFPG), 450–471 (HLVS…ALAG), 474–495 (RLIY…ALEG), 498–519 (RLGY…ALRA), 522–543 (SLFS…DLGR), 546–566 (ALRW…GALG), 570–591 (ELEK…ALEG), 594–615 (ALLE…AFQP), 619–640 (SLQH…AFSG), and 644–665 (GLQS…PSLS). Residue asparagine 626 is glycosylated (N-linked (GlcNAc...) asparagine). The LRRCT 2 domain occupies 675-724 (NPFHCDCQLLPLHRWLTGLNLRVGATCATPPNARGQRVKAAAAVFEDCPG). Disulfide bonds link cysteine 679/cysteine 722 and cysteine 681/cysteine 701. The span at 728-745 (RKAKRTPASRPSARRTPI) shows a compositional bias: basic residues. Residues 728–762 (RKAKRTPASRPSARRTPIKGRQCGADKVGKEKGRL) are disordered.

The protein belongs to the small leucine-rich proteoglycan (SLRP) family. SLRP class IV subfamily. Associates with collagen and binds to collagen fibrils.

Its subcellular location is the secreted. It is found in the extracellular space. The protein localises to the extracellular matrix. Potential negative modulator of chondrocyte differentiation. Inhibits collagen fibrillogenesis in vitro. May influence chondrocyte's differentiation by acting on its cellular collagenous microenvironment. This Homo sapiens (Human) protein is Chondroadherin-like protein (CHADL).